A 376-amino-acid chain; its full sequence is Succinate--CoA ligase [ADP-forming] subunit beta (376 aa).

The ATP-grasp domain occupies 9–234 (KAIAKKYGIP…ERELSELEKE (226 aa)). Residues lysine 45, 52–54 (GRG), glutamate 91, glutamate 94, and glutamate 99 each bind ATP. 2 residues coordinate Mg(2+): asparagine 191 and aspartate 204. Residues asparagine 254 and 311–313 (GIT) contribute to the substrate site.

Belongs to the succinate/malate CoA ligase beta subunit family. Heterotetramer of two alpha and two beta subunits. Mg(2+) is required as a cofactor.

It catalyses the reaction succinate + ATP + CoA = succinyl-CoA + ADP + phosphate. The catalysed reaction is GTP + succinate + CoA = succinyl-CoA + GDP + phosphate. It functions in the pathway carbohydrate metabolism; tricarboxylic acid cycle; succinate from succinyl-CoA (ligase route): step 1/1. Functionally, succinyl-CoA synthetase functions in the citric acid cycle (TCA), coupling the hydrolysis of succinyl-CoA to the synthesis of either ATP or GTP and thus represents the only step of substrate-level phosphorylation in the TCA. The beta subunit provides nucleotide specificity of the enzyme and binds the substrate succinate, while the binding sites for coenzyme A and phosphate are found in the alpha subunit. The protein is Succinate--CoA ligase [ADP-forming] subunit beta of Ignicoccus hospitalis (strain KIN4/I / DSM 18386 / JCM 14125).